Here is an 863-residue protein sequence, read N- to C-terminus: MPSASLLVSTKRLNASKFQKFVSSLNKSTIAGFASVPLRAPPSVAFTRKKVGYSKRYVSSTNGFSATRSTVIQLLNNISTKREVEQYLKYFTSVSQQQFAVIKVGGAIISDNLHELASCLAFLYHVGLYPIVLHGTGPQVNGRLEAQGIEPDYIDGIRITDEHTMAVVRKCFLEQNLKLVTALEQLGVRARPITSGVFTADYLDKDKYKLVGNIKSVTKEPIEASIKAGALPILTSLAETASGQMLNVNADVAAGELARVFEPLKIVYLNEKGGIINGSTGEKISMINLDEEYDDLMKQSWVKYGTKLKIREIKELLDYLPRSSSVAIINVQDLQKELFTDSGAGTMIRRGYKLVKRSSIGEFPSADALRKALQRDAGISSGKESVASYLRYLENSDFVSYADEPLEAVAIVKKDTNVPTLDKFVCSDAAWLNNVTDNVFNVLRRDFPALQWVVSENDANIAWHFDKSQGSYLKGGKVLFWYGIDDINTISELVENFVKSCDTASTLNSSASSGVFANKKSARSYSTRSTPRPEGVNTNPGRVALIGARGYTGKNLVSLINGHPYLEVAHVSSRELKGQKLQDYTKSEIIYESLQIQDIRKLEEQNAVDFWVMALPNKVCEPFVETIQSVHGKSKIIDLSADHRFVSESDWAYGLPELNDRAKIANAAKIANPGCYATGSQLTISPLTKYINGLPTVFGVSGYSGAGTKPSPKNDPKFLNNNLIPYALSDHIHEREISARIGHNVAFMPHVGQWFQGISLTVSIPIKKGSLSIDEIRKLYRNFYEDEKLVHVIDDIPLVKDIEGTHGVVIGGFKLNDAEDRVVVCATIDNLLKGAATQCLQNINLAMGYGEYAGIPENKIIGV.

Residues 1–65 (MPSASLLVST…RYVSSTNGFS (65 aa)) constitute a mitochondrion transit peptide. The region spanning 353–505 (KLVKRSSIGE…NFVKSCDTAS (153 aa)) is the N-acetyltransferase domain. Ser359 carries the phosphoserine modification. Cys675 is an active-site residue.

This sequence in the N-terminal section; belongs to the acetylglutamate kinase family. In the C-terminal section; belongs to the NAGSA dehydrogenase family. The protein precursor is cleaved into the two biologically active enzymes, the kinase and the reductase.

It localises to the mitochondrion. It catalyses the reaction N-acetyl-L-glutamate 5-semialdehyde + phosphate + NADP(+) = N-acetyl-L-glutamyl 5-phosphate + NADPH + H(+). It carries out the reaction N-acetyl-L-glutamate + ATP = N-acetyl-L-glutamyl 5-phosphate + ADP. It participates in amino-acid biosynthesis; L-arginine biosynthesis; N(2)-acetyl-L-ornithine from L-glutamate: step 2/4. The protein operates within amino-acid biosynthesis; L-arginine biosynthesis; N(2)-acetyl-L-ornithine from L-glutamate: step 3/4. With respect to regulation, the kinase activity is inhibited by arginine. This is Protein ARG5,6, mitochondrial (ARG5,6) from Saccharomyces cerevisiae (strain ATCC 204508 / S288c) (Baker's yeast).